Here is a 402-residue protein sequence, read N- to C-terminus: Deoxyguanosinetriphosphate triphosphohydrolase-like protein (402 aa).

The HD domain occupies 73-217 (RLTHTIEVAQ…AAIADDIAYN (145 aa)).

It belongs to the dGTPase family. Type 2 subfamily.

This Brucella suis (strain ATCC 23445 / NCTC 10510) protein is Deoxyguanosinetriphosphate triphosphohydrolase-like protein.